The sequence spans 272 residues: Ribonuclease HII (272 aa).

The RNase H type-2 domain maps to lysine 87–leucine 272. A divalent metal cation is bound by residues aspartate 93, glutamate 94, and aspartate 188.

Belongs to the RNase HII family. Mn(2+) serves as cofactor. Mg(2+) is required as a cofactor.

It is found in the cytoplasm. It catalyses the reaction Endonucleolytic cleavage to 5'-phosphomonoester.. Functionally, endonuclease that specifically degrades the RNA of RNA-DNA hybrids. In Clostridium perfringens (strain 13 / Type A), this protein is Ribonuclease HII.